A 415-amino-acid chain; its full sequence is Diaminopimelate decarboxylase (415 aa).

An N6-(pyridoxal phosphate)lysine modification is found at lysine 54. Pyridoxal 5'-phosphate-binding positions include glycine 223 and 264–267 (EPGR). 3 residues coordinate substrate: arginine 267, arginine 303, and tyrosine 307. The active-site Proton donor is cysteine 338. Glutamate 339 and tyrosine 374 together coordinate substrate. Tyrosine 374 provides a ligand contact to pyridoxal 5'-phosphate.

The protein belongs to the Orn/Lys/Arg decarboxylase class-II family. LysA subfamily. In terms of assembly, homodimer. Pyridoxal 5'-phosphate serves as cofactor.

It carries out the reaction meso-2,6-diaminopimelate + H(+) = L-lysine + CO2. Its pathway is amino-acid biosynthesis; L-lysine biosynthesis via DAP pathway; L-lysine from DL-2,6-diaminopimelate: step 1/1. In terms of biological role, specifically catalyzes the decarboxylation of meso-diaminopimelate (meso-DAP) to L-lysine. This Buchnera aphidicola subsp. Schizaphis graminum (strain Sg) protein is Diaminopimelate decarboxylase.